Consider the following 175-residue polypeptide: ATP-dependent protease subunit HslV (175 aa).

The active site involves T2. 3 residues coordinate Na(+): A156, C159, and T162.

Belongs to the peptidase T1B family. HslV subfamily. As to quaternary structure, a double ring-shaped homohexamer of HslV is capped on each side by a ring-shaped HslU homohexamer. The assembly of the HslU/HslV complex is dependent on binding of ATP.

The protein resides in the cytoplasm. It carries out the reaction ATP-dependent cleavage of peptide bonds with broad specificity.. Its activity is regulated as follows. Allosterically activated by HslU binding. In terms of biological role, protease subunit of a proteasome-like degradation complex believed to be a general protein degrading machinery. The sequence is that of ATP-dependent protease subunit HslV from Rhizobium johnstonii (strain DSM 114642 / LMG 32736 / 3841) (Rhizobium leguminosarum bv. viciae).